We begin with the raw amino-acid sequence, 474 residues long: ATP synthase subunit beta 1 (474 aa).

157-164 (GGAGVGKT) is a binding site for ATP.

The protein belongs to the ATPase alpha/beta chains family. In terms of assembly, F-type ATPases have 2 components, CF(1) - the catalytic core - and CF(0) - the membrane proton channel. CF(1) has five subunits: alpha(3), beta(3), gamma(1), delta(1), epsilon(1). CF(0) has three main subunits: a(1), b(2) and c(9-12). The alpha and beta chains form an alternating ring which encloses part of the gamma chain. CF(1) is attached to CF(0) by a central stalk formed by the gamma and epsilon chains, while a peripheral stalk is formed by the delta and b chains.

The protein resides in the cell inner membrane. The catalysed reaction is ATP + H2O + 4 H(+)(in) = ADP + phosphate + 5 H(+)(out). Its function is as follows. Produces ATP from ADP in the presence of a proton gradient across the membrane. The catalytic sites are hosted primarily by the beta subunits. This is ATP synthase subunit beta 1 from Albidiferax ferrireducens (strain ATCC BAA-621 / DSM 15236 / T118) (Rhodoferax ferrireducens).